We begin with the raw amino-acid sequence, 296 residues long: 4-hydroxybenzoate octaprenyltransferase (296 aa).

8 helical membrane-spanning segments follow: residues 28-48 (PIGIYLLLWPTLSAVWIAGNG), 52-72 (LANVLIFGLGVVLMRAAGCCI), 102-122 (ALALFAMLVGVSFLLVLCTNS), 145-167 (TYYPQVVLGAAYSWGIPMAFTAA), 174-196 (SAWLLYIANLLWTVGYDTYYAMV), 219-239 (NIILTLQLLSLGCLLLAGSRF), 241-261 (LGGWFHLGLLGAAACFAWEYW), and 275-295 (FLHNHWAGLLVFIGVVLDYAF).

It belongs to the UbiA prenyltransferase family. The cofactor is Mg(2+).

Its subcellular location is the cell inner membrane. The enzyme catalyses all-trans-octaprenyl diphosphate + 4-hydroxybenzoate = 4-hydroxy-3-(all-trans-octaprenyl)benzoate + diphosphate. It functions in the pathway cofactor biosynthesis; ubiquinone biosynthesis. Its function is as follows. Catalyzes the prenylation of para-hydroxybenzoate (PHB) with an all-trans polyprenyl group. Mediates the second step in the final reaction sequence of ubiquinone-8 (UQ-8) biosynthesis, which is the condensation of the polyisoprenoid side chain with PHB, generating the first membrane-bound Q intermediate 3-octaprenyl-4-hydroxybenzoate. The chain is 4-hydroxybenzoate octaprenyltransferase from Pseudomonas putida (strain GB-1).